We begin with the raw amino-acid sequence, 93 residues long: Small ribosomal subunit protein uS19 (93 aa).

Belongs to the universal ribosomal protein uS19 family.

In terms of biological role, protein S19 forms a complex with S13 that binds strongly to the 16S ribosomal RNA. This Karelsulcia muelleri (strain GWSS) (Sulcia muelleri) protein is Small ribosomal subunit protein uS19.